Consider the following 208-residue polypeptide: MSNLLVLNSSANTGESVSRILIDEAVNQILTAAPGTDVVRRDLGANPVPHLTTANLAGVRGTPSTSEELAARALSDELIAELKAAGTVIIAAPMYNFSVPTSLRSWFDFVLRAGETFKYSEAGPEGLLKGKKVVVLTSRGGLYSEGPAAAADFQEPYLRHLLGFVGITDVTFIHAEKIGFGPEARAAAITGAKGQIAKVAQTFSTVAA.

FMN-binding positions include Ser-10, 16-18 (SVS), 94-97 (MYNF), and 138-141 (SRGG).

The protein belongs to the azoreductase type 1 family. Homodimer. It depends on FMN as a cofactor.

The enzyme catalyses 2 a quinone + NADH + H(+) = 2 a 1,4-benzosemiquinone + NAD(+). The catalysed reaction is N,N-dimethyl-1,4-phenylenediamine + anthranilate + 2 NAD(+) = 2-(4-dimethylaminophenyl)diazenylbenzoate + 2 NADH + 2 H(+). Quinone reductase that provides resistance to thiol-specific stress caused by electrophilic quinones. In terms of biological role, also exhibits azoreductase activity. Catalyzes the reductive cleavage of the azo bond in aromatic azo compounds to the corresponding amines. In Hyphomonas neptunium (strain ATCC 15444), this protein is FMN-dependent NADH:quinone oxidoreductase.